Reading from the N-terminus, the 78-residue chain is Delta-conotoxin-like S6.8 (78 aa).

An N-terminal signal peptide occupies residues methionine 1–alanine 22. Positions aspartate 23–glycine 53 are excised as a propeptide. Disulfide bonds link cysteine 54/cysteine 69, cysteine 61/cysteine 73, and cysteine 68/cysteine 77.

Belongs to the conotoxin O1 superfamily. In terms of tissue distribution, expressed by the venom duct.

Its subcellular location is the secreted. Its function is as follows. Delta-conotoxins bind to site 6 of voltage-gated sodium channels (Nav) and inhibit the inactivation process. This Conus striatus (Striated cone) protein is Delta-conotoxin-like S6.8.